The following is a 143-amino-acid chain: Large ribosomal subunit protein uL11 (143 aa).

This sequence belongs to the universal ribosomal protein uL11 family. As to quaternary structure, part of the ribosomal stalk of the 50S ribosomal subunit. Interacts with L10 and the large rRNA to form the base of the stalk. L10 forms an elongated spine to which L12 dimers bind in a sequential fashion forming a multimeric L10(L12)X complex. Post-translationally, one or more lysine residues are methylated.

Its function is as follows. Forms part of the ribosomal stalk which helps the ribosome interact with GTP-bound translation factors. The polypeptide is Large ribosomal subunit protein uL11 (Pseudomonas entomophila (strain L48)).